Here is a 47-residue protein sequence, read N- to C-terminus: UPF0391 membrane protein rrnAC2507 (47 aa).

The next 2 membrane-spanning stretches (helical) occupy residues 5–25 (VVLVILAVVAGIAGFRGIAGL) and 27–47 (FRVAKFLIVIFLVLALVTFLL).

This sequence belongs to the UPF0391 family.

The protein resides in the cell membrane. This chain is UPF0391 membrane protein rrnAC2507, found in Haloarcula marismortui (strain ATCC 43049 / DSM 3752 / JCM 8966 / VKM B-1809) (Halobacterium marismortui).